The chain runs to 61 residues: Small ribosomal subunit protein uS14 (61 aa).

Zn(2+)-binding residues include cysteine 24, cysteine 27, cysteine 40, and cysteine 43.

This sequence belongs to the universal ribosomal protein uS14 family. Zinc-binding uS14 subfamily. As to quaternary structure, part of the 30S ribosomal subunit. Contacts proteins S3 and S10. Zn(2+) serves as cofactor.

Binds 16S rRNA, required for the assembly of 30S particles and may also be responsible for determining the conformation of the 16S rRNA at the A site. The protein is Small ribosomal subunit protein uS14 of Mycoplasmopsis agalactiae (strain NCTC 10123 / CIP 59.7 / PG2) (Mycoplasma agalactiae).